The chain runs to 237 residues: Maternal B9.10 protein (237 aa).

Belongs to the BTG family.

This Xenopus laevis (African clawed frog) protein is Maternal B9.10 protein.